Reading from the N-terminus, the 416-residue chain is MFSKSVTLAQYDPDLAAAIAQEDQRQQDHVELIASENYVSCAVMEAQGSQLTNKYAEGYPGKRYYGGCEYVDIVEQLAIDRVKKLFGAQYANVQPHSGSQANQAVYASVLKPGDTILGMSLAHGGHLTHGASVNISGKLYNAVTYGLDENEVLDYAEVERLALEHKPKMIVAGASAYALQIDWAKFREIADKVGAYLFVDMAHYAGLIAGGEYPNPVPFCDFVTTTTHKTLRGPRGGVILCRDNTHEKALNSSIFPSLQGGPLMHVIAAKAVAFKEALQPEFKQYAKQVKINAAAMAEELVKRGLRIVSGRTESHVFLVDLQPMKITGKAAEAALGKAHITVNKNAIPNDPEKPFVTSGIRIGSAAMTTRGFNEADARVLANLVADVLSNPEDEANLENVRKQITALCDKYPVYGA.

Residues Leu-121 and 125 to 127 (GHL) contribute to the (6S)-5,6,7,8-tetrahydrofolate site. Residue Lys-229 is modified to N6-(pyridoxal phosphate)lysine.

This sequence belongs to the SHMT family. As to quaternary structure, homodimer. Pyridoxal 5'-phosphate serves as cofactor.

It localises to the cytoplasm. It catalyses the reaction (6R)-5,10-methylene-5,6,7,8-tetrahydrofolate + glycine + H2O = (6S)-5,6,7,8-tetrahydrofolate + L-serine. Its pathway is one-carbon metabolism; tetrahydrofolate interconversion. It functions in the pathway amino-acid biosynthesis; glycine biosynthesis; glycine from L-serine: step 1/1. In terms of biological role, catalyzes the reversible interconversion of serine and glycine with tetrahydrofolate (THF) serving as the one-carbon carrier. This reaction serves as the major source of one-carbon groups required for the biosynthesis of purines, thymidylate, methionine, and other important biomolecules. Also exhibits THF-independent aldolase activity toward beta-hydroxyamino acids, producing glycine and aldehydes, via a retro-aldol mechanism. The sequence is that of Serine hydroxymethyltransferase from Neisseria meningitidis serogroup C / serotype 2a (strain ATCC 700532 / DSM 15464 / FAM18).